Reading from the N-terminus, the 87-residue chain is Small ribosomal subunit protein bS20 (87 aa).

It belongs to the bacterial ribosomal protein bS20 family.

Binds directly to 16S ribosomal RNA. The sequence is that of Small ribosomal subunit protein bS20 from Lachnoclostridium phytofermentans (strain ATCC 700394 / DSM 18823 / ISDg) (Clostridium phytofermentans).